The sequence spans 150 residues: MRAPLGPAEIRRLLPHRYPFLLVDRIEELEPGVRAVGVKNVTQNEPFFQGHFPGYPVMPGVLIVEAMAQVGAVGVMAVEEYRGRLALFAGIDGVRFRRQVVPGDALRMEVEIDRLRGRVGRGRGLAFVGGERACEAELMFAFAERGEESR.

Residue H51 is part of the active site.

This sequence belongs to the thioester dehydratase family. FabZ subfamily.

The protein localises to the cytoplasm. It catalyses the reaction a (3R)-hydroxyacyl-[ACP] = a (2E)-enoyl-[ACP] + H2O. Its function is as follows. Involved in unsaturated fatty acids biosynthesis. Catalyzes the dehydration of short chain beta-hydroxyacyl-ACPs and long chain saturated and unsaturated beta-hydroxyacyl-ACPs. This is 3-hydroxyacyl-[acyl-carrier-protein] dehydratase FabZ from Rubrobacter xylanophilus (strain DSM 9941 / JCM 11954 / NBRC 16129 / PRD-1).